We begin with the raw amino-acid sequence, 337 residues long: Ribosomal RNA small subunit methyltransferase H (337 aa).

S-adenosyl-L-methionine is bound by residues 36-38 (GGH), aspartate 56, phenylalanine 82, aspartate 100, and glutamine 107. A disordered region spans residues 315–337 (LEERSKRIPNPQSPIPASQGDAQ).

Belongs to the methyltransferase superfamily. RsmH family.

Its subcellular location is the cytoplasm. It catalyses the reaction cytidine(1402) in 16S rRNA + S-adenosyl-L-methionine = N(4)-methylcytidine(1402) in 16S rRNA + S-adenosyl-L-homocysteine + H(+). In terms of biological role, specifically methylates the N4 position of cytidine in position 1402 (C1402) of 16S rRNA. The polypeptide is Ribosomal RNA small subunit methyltransferase H (Xanthomonas euvesicatoria pv. vesicatoria (strain 85-10) (Xanthomonas campestris pv. vesicatoria)).